The following is a 173-amino-acid chain: Ribosome maturation factor RimM (173 aa).

A PRC barrel domain is found at 98–170; that stretch reads EDEYYWCDLI…RMLITPLEGL (73 aa).

This sequence belongs to the RimM family. In terms of assembly, binds ribosomal protein uS19.

Its subcellular location is the cytoplasm. Its function is as follows. An accessory protein needed during the final step in the assembly of 30S ribosomal subunit, possibly for assembly of the head region. Essential for efficient processing of 16S rRNA. May be needed both before and after RbfA during the maturation of 16S rRNA. It has affinity for free ribosomal 30S subunits but not for 70S ribosomes. The chain is Ribosome maturation factor RimM from Pelobacter propionicus (strain DSM 2379 / NBRC 103807 / OttBd1).